A 72-amino-acid chain; its full sequence is MKKIVFVLTLMLFSFGTLGQETASGQVGDVSSSTIATEVSEAECGTQSATTQGENDWDWCCELCCNPACFGC.

Residues 1–19 (MKKIVFVLTLMLFSFGTLG) form the signal peptide. Cystine bridges form between Cys60–Cys65, Cys61–Cys69, and Cys64–Cys72.

It belongs to the heat-stable enterotoxin family.

It localises to the secreted. Toxin which activates the particulate form of guanylate cyclase and increases cyclic GMP levels within the host intestinal epithelial cells. Highly toxic. The sequence is that of Heat-stable enterotoxin C (ystC) from Yersinia enterocolitica.